The chain runs to 692 residues: Protein arginine N-methyltransferase 7 (692 aa).

2 consecutive SAM-dependent MTase PRMT-type domains span residues 14–345 (SVEW…YCVW) and 358–684 (RVRQ…IIME). Position 32 is an omega-N-methylarginine (R32). Active-site residues include E144 and E153.

This sequence belongs to the class I-like SAM-binding methyltransferase superfamily. Protein arginine N-methyltransferase family. PRMT7 subfamily. As to quaternary structure, homodimer and heterodimer. Interacts with CTCFL. Interacts with PRMT5 and SNRPD3.

It localises to the cytoplasm. It is found in the cytosol. The protein resides in the nucleus. The catalysed reaction is L-arginyl-[protein] + S-adenosyl-L-methionine = N(omega)-methyl-L-arginyl-[protein] + S-adenosyl-L-homocysteine + H(+). Functionally, arginine methyltransferase that can both catalyze the formation of omega-N monomethylarginine (MMA) and symmetrical dimethylarginine (sDMA), with a preference for the formation of MMA. Specifically mediates the symmetrical dimethylation of arginine residues in the small nuclear ribonucleoproteins Sm D1 (SNRPD1) and Sm D3 (SNRPD3); such methylation being required for the assembly and biogenesis of snRNP core particles. Specifically mediates the symmetric dimethylation of histone H4 'Arg-3' to form H4R3me2s. Plays a role in gene imprinting by being recruited by CTCFL at the H19 imprinted control region (ICR) and methylating histone H4 to form H4R3me2s, possibly leading to recruit DNA methyltransferases at these sites. May also play a role in embryonic stem cell (ESC) pluripotency. Also able to mediate the arginine methylation of histone H2A and myelin basic protein (MBP) in vitro; the relevance of such results is however unclear in vivo. This chain is Protein arginine N-methyltransferase 7 (PRMT7), found in Homo sapiens (Human).